The sequence spans 404 residues: Formate-dependent phosphoribosylglycinamide formyltransferase (404 aa).

N(1)-(5-phospho-beta-D-ribosyl)glycinamide is bound by residues 25–26 and Glu-85; that span reads EL. ATP-binding positions include Arg-118, Lys-159, 164–169, 199–202, and Glu-207; these read SSGKGQ and EGFI. The region spanning 123–318 is the ATP-grasp domain; sequence RLAAEELGLP…EFELHARAIL (196 aa). Residues Glu-277 and Glu-289 each coordinate Mg(2+). Residues Asp-296, Lys-365, and 372–373 contribute to the N(1)-(5-phospho-beta-D-ribosyl)glycinamide site; that span reads RR.

It belongs to the PurK/PurT family. In terms of assembly, homodimer.

The catalysed reaction is N(1)-(5-phospho-beta-D-ribosyl)glycinamide + formate + ATP = N(2)-formyl-N(1)-(5-phospho-beta-D-ribosyl)glycinamide + ADP + phosphate + H(+). It functions in the pathway purine metabolism; IMP biosynthesis via de novo pathway; N(2)-formyl-N(1)-(5-phospho-D-ribosyl)glycinamide from N(1)-(5-phospho-D-ribosyl)glycinamide (formate route): step 1/1. In terms of biological role, involved in the de novo purine biosynthesis. Catalyzes the transfer of formate to 5-phospho-ribosyl-glycinamide (GAR), producing 5-phospho-ribosyl-N-formylglycinamide (FGAR). Formate is provided by PurU via hydrolysis of 10-formyl-tetrahydrofolate. The protein is Formate-dependent phosphoribosylglycinamide formyltransferase of Burkholderia pseudomallei (strain 1106a).